Consider the following 645-residue polypeptide: MESPAFSKPLKDKINPWGPLIIMGILVRAGASVQRDSPHQVFNVTWKITNLMTGQTANATSLLGTMTDTFPKLYFDLCDLVGDNWDDPEPDIGDGCRSPGGRKRTRLYDFYVCPGHTVLTGCGGPREGYCGKWGCETTGQAYWKPSSSWDLISLKRGNTPKGQGPCFDSSVGSGSIQGATPGGRCNPLVLEFTDAGKRASWDAPKTWGLRLYRSTGADPVTLFSLTRQVLNVGPRVPIGPNPVITEQLPPSQPVQIMLPRPPRPPPSGAASMVPGAPPPSQQPGTGDRLLNLVEGAYQALNLTSPDKTQECWLCLVSGPPYYEGVAVLGTYSNHTSAPANCSVTSQHKLTLSEVTGQGLCIGAVPKTHQALCNTTQKTSDGSYYLASPAGTIWACSTGLTPCLSTTVLNLTTDYCVLVELWPKVTYHSPNYVYGQFEKKTKYKREPVSLTLALLLGGLTMGGIAAGVGTGTTALVATKQFEQLQAAIHTDLGALEKSVSALEKSLTSLSEVVLQNRRGLDLLFLKEGGLCAALKEECCFYADHTGVVRDSMAKLRERLNQRQKLFESGQGWFEGLFNRSPWFTTLISTIMGPLIVLLLILLFGPCILNRLVQFVKDRISVVQALVLTQQYHQLKSIDPEEVESRE.

The signal sequence occupies residues 1-33 (MESPAFSKPLKDKINPWGPLIIMGILVRAGASV). The segment at 32–237 (SVQRDSPHQV…QVLNVGPRVP (206 aa)) is receptor-binding domain (RBD). Topologically, residues 34-585 (QRDSPHQVFN…FNRSPWFTTL (552 aa)) are extracellular. Residues N43 and N58 are each glycosylated (N-linked (GlcNAc...) asparagine; by host). Intrachain disulfides connect C113–C130 and C122–C135. Positions 259–286 (PRPPRPPPSGAASMVPGAPPPSQQPGTG) are disordered. N301 carries N-linked (GlcNAc...) asparagine; by host glycosylation. 6 disulfides stabilise this stretch: C311–C314, C311–C538, C341–C395, C360–C372, C402–C415, and C530–C537. A CXXC motif is present at residues 311-314 (CWLC). N-linked (GlcNAc...) asparagine; by host glycosylation is found at N333 and N340. N-linked (GlcNAc...) asparagine; by host glycans are attached at residues N373 and N409. The tract at residues 447–467 (VSLTLALLLGGLTMGGIAAGV) is fusion peptide. A coiled-coil region spans residues 490-510 (DLGALEKSVSALEKSLTSLSE). The immunosuppression stretch occupies residues 513 to 529 (LQNRRGLDLLFLKEGGL). A CX6CC motif is present at residues 530–538 (CAALKEECC). A helical transmembrane segment spans residues 586–606 (ISTIMGPLIVLLLILLFGPCI). Residue C605 is the site of S-palmitoyl cysteine; by host attachment. Over 607 to 640 (LNRLVQFVKDRISVVQALVLTQQYHQLKSIDPEE) the chain is Cytoplasmic. The YXXL motif; contains endocytosis signal signature appears at 630 to 633 (YHQL).

The mature envelope protein (Env) consists of a trimer of SU-TM heterodimers attached by a labile interchain disulfide bond. The activated Env consists of SU monomers and TM trimers. Post-translationally, specific enzymatic cleavages in vivo yield mature proteins. Envelope glycoproteins are synthesized as an inactive precursor that is N-glycosylated and processed likely by host cell furin or by a furin-like protease in the Golgi to yield the mature SU and TM proteins. The cleavage site between SU and TM requires the minimal sequence [KR]-X-[KR]-R. The R-peptide is released from the C-terminus of the cytoplasmic tail of the TM protein upon particle formation as a result of proteolytic cleavage by the viral protease. Cleavage of this peptide is required for TM to become fusogenic. In terms of processing, the CXXC motif is highly conserved across a broad range of retroviral envelope proteins. It is thought to participate in the formation of a labile disulfide bond possibly with the CX6CC motif present in the transmembrane protein. Isomerization of the intersubunit disulfide bond to an SU intrachain disulfide bond is thought to occur upon receptor recognition in order to allow membrane fusion. The transmembrane protein is palmitoylated. Post-translationally, the R-peptide is palmitoylated.

Its subcellular location is the virion membrane. It is found in the host cell membrane. Functionally, the surface protein (SU) attaches the virus to the host cell by binding to its receptor. This interaction activates a thiol in a CXXC motif of the C-terminal domain, where the other Cys residue participates in the formation of the intersubunit disulfide. The activated thiol will attack the disulfide and cause its isomerization into a disulfide isomer within the motif. This leads to SU displacement and TM refolding, and is thought to activate its fusogenic potential by unmasking its fusion peptide. Fusion occurs at the host cell plasma membrane. The transmembrane protein (TM) acts as a class I viral fusion protein. Under the current model, the protein has at least 3 conformational states: pre-fusion native state, pre-hairpin intermediate state, and post-fusion hairpin state. During viral and target cell membrane fusion, the coiled coil regions (heptad repeats) assume a trimer-of-hairpins structure, positioning the fusion peptide in close proximity to the C-terminal region of the ectodomain. The formation of this structure appears to drive apposition and subsequent fusion of viral and target cell membranes. Membranes fusion leads to delivery of the nucleocapsid into the cytoplasm. The protein is Envelope glycoprotein (env) of Xenotropic MuLV-related virus (isolate VP42) (XMRV).